The primary structure comprises 239 residues: Fatty acid metabolism regulator protein (239 aa).

The 69-residue stretch at 6-74 (QSPAGFAEEY…HGKPTKVNNF (69 aa)) folds into the HTH gntR-type domain. The H-T-H motif DNA-binding region spans 34 to 53 (ERELSELIGVTRTTLREVLQ).

Homodimer.

The protein localises to the cytoplasm. Its function is as follows. Multifunctional regulator of fatty acid metabolism. Represses transcription of at least eight genes required for fatty acid transport and beta-oxidation including fadA, fadB, fadD, fadL and fadE. Activates transcription of at least three genes required for unsaturated fatty acid biosynthesis: fabA, fabB and iclR, the gene encoding the transcriptional regulator of the aceBAK operon encoding the glyoxylate shunt enzymes. Binding of FadR is specifically inhibited by long chain fatty acyl-CoA compounds. The sequence is that of Fatty acid metabolism regulator protein from Salmonella typhi.